A 474-amino-acid chain; its full sequence is Lipoprotein lipase (474 aa).

A signal peptide spans 1 to 27; that stretch reads MESKALLLVALGVWLQSLTAFRGGVAA. Residues 32-53 form an interaction with GPIHBP1 region; the sequence is RDFSDIESKFALRTPEDTAEDT. Cysteines 54 and 67 form a disulfide. An N-linked (GlcNAc...) asparagine glycan is attached at asparagine 70. Tyrosine 121 carries the 3'-nitrotyrosine modification. The Nucleophile role is filled by serine 159. Catalysis depends on aspartate 183, which acts as the Charge relay system. Tyrosine 191 carries the 3'-nitrotyrosine modification. Alanine 194, arginine 197, serine 199, and aspartate 202 together coordinate Ca(2+). Cysteine 243 and cysteine 266 form a disulfide bridge. The essential for determining substrate specificity stretch occupies residues 243-266; that stretch reads CNIGEAIRVIAEKGLGDVDQLVKC. Catalysis depends on histidine 268, which acts as the Charge relay system. Cystine bridges form between cysteine 291–cysteine 310 and cysteine 302–cysteine 305. One can recognise a PLAT domain in the interval 341 to 464; that stretch reads FHYQVKIHFS…KGKDAAVFVK (124 aa). 3'-nitrotyrosine is present on tyrosine 343. N-linked (GlcNAc...) asparagine glycosylation occurs at asparagine 386. The segment at 417 to 421 is important for interaction with lipoprotein particles; the sequence is WSDWW. Positions 430 to 434 are important for heparin binding; that stretch reads KIRVK. The interval 443 to 467 is interaction with GPIHBP1; it reads IFCAREKVSHLQKGKDAAVFVKCHD. Residues cysteine 445 and cysteine 465 are joined by a disulfide bond.

This sequence belongs to the AB hydrolase superfamily. Lipase family. In terms of assembly, homodimer. Interacts with GPIHBP1 with 1:1 stoichiometry. Interacts with APOC2; the interaction activates LPL activity in the presence of lipids. Interaction with heparan sulfate proteoglycans is required to protect LPL against loss of activity. Associates with lipoprotein particles in blood plasma. Interacts with LMF1 and SEL1L; interaction with SEL1L is required to prevent aggregation of newly synthesized LPL in the endoplasmic reticulum (ER), and for normal export of LPL from the ER to the extracellular space. Interacts with SORL1; SORL1 acts as a sorting receptor, promoting LPL localization to endosomes and later to lysosomes, leading to degradation of newly synthesized LPL. Tyrosine nitration after lipopolysaccharide (LPS) challenge down-regulates the lipase activity.

The protein resides in the cell membrane. It localises to the secreted. It is found in the extracellular space. Its subcellular location is the extracellular matrix. It carries out the reaction a triacylglycerol + H2O = a diacylglycerol + a fatty acid + H(+). The catalysed reaction is a 1,2-diacyl-sn-glycero-3-phosphocholine + H2O = a 2-acyl-sn-glycero-3-phosphocholine + a fatty acid + H(+). It catalyses the reaction 1,2,3-tri-(9Z-octadecenoyl)-glycerol + H2O = di-(9Z)-octadecenoylglycerol + (9Z)-octadecenoate + H(+). The enzyme catalyses 1,2-di-(9Z-octadecenoyl)-sn-glycero-3-phosphocholine + H2O = (9Z-octadecenoyl)-sn-glycero-3-phosphocholine + (9Z)-octadecenoate + H(+). It carries out the reaction 1,2,3-tributanoylglycerol + H2O = dibutanoylglycerol + butanoate + H(+). The catalysed reaction is 1,2-dihexadecanoyl-sn-glycero-3-phosphocholine + H2O = hexadecanoyl-sn-glycero-3-phosphocholine + hexadecanoate + H(+). With respect to regulation, the apolipoprotein APOC2 acts as a coactivator of LPL activity. Ca(2+) binding promotes protein stability and formation of the active homodimer. Interaction with GPIHBP1 protects LPL against inactivation by ANGPTL4. Key enzyme in triglyceride metabolism. Catalyzes the hydrolysis of triglycerides from circulating chylomicrons and very low density lipoproteins (VLDL), and thereby plays an important role in lipid clearance from the blood stream, lipid utilization and storage. Although it has both phospholipase and triglyceride lipase activities it is primarily a triglyceride lipase with low but detectable phospholipase activity. Mediates margination of triglyceride-rich lipoprotein particles in capillaries. Recruited to its site of action on the luminal surface of vascular endothelium by binding to GPIHBP1 and cell surface heparan sulfate proteoglycans. This chain is Lipoprotein lipase (Lpl), found in Rattus norvegicus (Rat).